Here is a 120-residue protein sequence, read N- to C-terminus: MTSFAVVARLITRAPRVRASVPTRLVHGTTSTRKDSVCDKATEAQQKVAKKADEGAQTISDAAGNLKDKAKNTAEEAWDKVKDTTEKIKDTVTGKTEETKESIKATAKTVERSMNTKNLK.

Residues 1 to 19 (MTSFAVVARLITRAPRVRA) form the signal peptide. Disordered regions lie at residues 48-71 (VAKK…DKAK) and 90-120 (DTVT…KNLK). The segment covering 90–103 (DTVTGKTEETKESI) has biased composition (basic and acidic residues).

This is an uncharacterized protein from Arabidopsis thaliana (Mouse-ear cress).